Here is a 289-residue protein sequence, read N- to C-terminus: ATP synthase gamma chain (289 aa).

It belongs to the ATPase gamma chain family. F-type ATPases have 2 components, CF(1) - the catalytic core - and CF(0) - the membrane proton channel. CF(1) has five subunits: alpha(3), beta(3), gamma(1), delta(1), epsilon(1). CF(0) has three main subunits: a, b and c.

The protein resides in the cell inner membrane. In terms of biological role, produces ATP from ADP in the presence of a proton gradient across the membrane. The gamma chain is believed to be important in regulating ATPase activity and the flow of protons through the CF(0) complex. The protein is ATP synthase gamma chain of Histophilus somni (strain 129Pt) (Haemophilus somnus).